A 352-amino-acid chain; its full sequence is PDZ and LIM domain protein 2 (352 aa).

A PDZ domain is found at 1 to 84 (MALTVDVAGP…PLRLQLDRSQ (84 aa)). 2 disordered regions span residues 69–95 (IRQS…NGDS) and 108–141 (VRTH…PPPF). Residues 81-95 (DRSQAASPGQTNGDS) are compositionally biased toward polar residues. Residues 117-135 (SLRSSYSSPTSLSPRAGSP) are compositionally biased toward low complexity. Ser124 carries the phosphoserine modification. A Phosphothreonine modification is found at Thr126. A phosphoserine mark is found at Ser127, Ser129, Ser134, Ser137, Ser143, Ser161, Ser197, Ser203, Ser213, and Ser266. 2 disordered regions span residues 170–214 (LSYS…GGSL) and 253–275 (ERGG…PASR). Residues 258–275 (PAFLPSSLSPQSSLPASR) show a composition bias toward low complexity. In terms of domain architecture, LIM zinc-binding spans 284–344 (HTCEKCSTSI…EKHARQRYSA (61 aa)).

In terms of assembly, interacts with alpha-actinins ACTN1 and ACTN4, FLNA and MYH9. Interacts (via LIM zinc-binding domain) with MKRN2.

Its subcellular location is the cytoplasm. The protein localises to the cytoskeleton. Functionally, probable adapter protein located at the actin cytoskeleton that promotes cell attachment. Necessary for the migratory capacity of epithelial cells. Overexpression enhances cell adhesion to collagen and fibronectin and suppresses anchorage independent growth. May contribute to tumor cell migratory capacity. The protein is PDZ and LIM domain protein 2 (PDLIM2) of Macaca fascicularis (Crab-eating macaque).